A 118-amino-acid polypeptide reads, in one-letter code: Large ribosomal subunit protein bL19 (118 aa).

It belongs to the bacterial ribosomal protein bL19 family.

In terms of biological role, this protein is located at the 30S-50S ribosomal subunit interface and may play a role in the structure and function of the aminoacyl-tRNA binding site. This chain is Large ribosomal subunit protein bL19, found in Buchnera aphidicola subsp. Baizongia pistaciae (strain Bp).